The primary structure comprises 260 residues: Alpha carbonic anhydrase 6 (260 aa).

The first 28 residues, 1 to 28, serve as a signal peptide directing secretion; that stretch reads MDANTKTILFFVVFFIDLFSPNILFVYA. An Alpha-carbonic anhydrase domain is found at 35 to 260; the sequence is PLFTYKQKTE…FVFVFWCMLM (226 aa). An intrachain disulfide couples C60 to C215. H100 serves as the catalytic Proton acceptor. Zn(2+)-binding residues include H126 and H128. An N-linked (GlcNAc...) asparagine glycan is attached at N136. H145 is a Zn(2+) binding site. 211 to 212 serves as a coordination point for substrate; sequence TI.

Belongs to the alpha-class carbonic anhydrase family. Zn(2+) serves as cofactor. N-glycosylated.

The protein localises to the plastid. The protein resides in the chloroplast stroma. It catalyses the reaction hydrogencarbonate + H(+) = CO2 + H2O. Reversible hydration of carbon dioxide. This is Alpha carbonic anhydrase 6 (ACA6) from Arabidopsis thaliana (Mouse-ear cress).